Consider the following 190-residue polypeptide: A-type ATP synthase subunit E (190 aa).

This sequence belongs to the V-ATPase E subunit family. In terms of assembly, has multiple subunits with at least A(3), B(3), C, D, E, F, H, I and proteolipid K(x).

The protein localises to the cell membrane. Its function is as follows. Component of the A-type ATP synthase that produces ATP from ADP in the presence of a proton gradient across the membrane. This chain is A-type ATP synthase subunit E, found in Pyrobaculum neutrophilum (strain DSM 2338 / JCM 9278 / NBRC 100436 / V24Sta) (Thermoproteus neutrophilus).